Consider the following 342-residue polypeptide: Ribosomal RNA small subunit methyltransferase C (342 aa).

This sequence belongs to the methyltransferase superfamily. RsmC family. As to quaternary structure, monomer.

It localises to the cytoplasm. The enzyme catalyses guanosine(1207) in 16S rRNA + S-adenosyl-L-methionine = N(2)-methylguanosine(1207) in 16S rRNA + S-adenosyl-L-homocysteine + H(+). Its function is as follows. Specifically methylates the guanine in position 1207 of 16S rRNA in the 30S particle. The chain is Ribosomal RNA small subunit methyltransferase C from Erwinia tasmaniensis (strain DSM 17950 / CFBP 7177 / CIP 109463 / NCPPB 4357 / Et1/99).